Consider the following 354-residue polypeptide: Guanine nucleotide-binding protein G(t) subunit alpha-2 (354 aa).

The tract at residues 1–28 is disordered; it reads MGSGISAEDKELARRSKELEKKLQEDAD. Gly-2 is lipidated: N-myristoyl glycine. Basic and acidic residues predominate over residues 7–28; the sequence is AEDKELARRSKELEKKLQEDAD. The region spanning 32–354 is the G-alpha domain; sequence KTVKLLLLGA…KENLKDCGLF (323 aa). The segment at 35–48 is G1 motif; sequence KLLLLGAGESGKST. GTP is bound by residues 40-47, 175-181, 200-204, 269-272, and Ala-326; these read GAGESGKS, LRSRVKT, DVGGQ, and NKKD. The Mg(2+) site is built by Ser-47 and Thr-181. The G2 motif stretch occupies residues 173–181; the sequence is DVLRSRVKT. The G3 motif stretch occupies residues 196–205; it reads FRMFDVGGQR. The interval 265-272 is G4 motif; that stretch reads VLFLNKKD. Positions 324–329 are G5 motif; sequence TCATDT.

Belongs to the G-alpha family. G(i/o/t/z) subfamily. G proteins are composed of 3 units; alpha, beta and gamma. The alpha chain contains the guanine nucleotide binding site. In terms of tissue distribution, in the retina, expressed in the rod photoreceptors.

The protein localises to the cell projection. It localises to the cilium. It is found in the photoreceptor outer segment. The protein resides in the photoreceptor inner segment. Guanine nucleotide-binding proteins (G proteins) are involved as modulators or transducers in various transmembrane signaling systems. Transducin is an amplifier and one of the transducers of a visual impulse that performs the coupling between rhodopsin and cGMP-phosphodiesterase. The polypeptide is Guanine nucleotide-binding protein G(t) subunit alpha-2 (Gnat2) (Mus musculus (Mouse)).